We begin with the raw amino-acid sequence, 249 residues long: MTIDTVILDIEGTICPISFVKSVLFPYFVKQLPTTLNTIQFPLNLNINDTNSNQASIVQTLSKLPLSVTTSSESTYNYLKGLVDNDVKDPVLKALQGLIWKQGYESGEIKSPVYPDSIDFIEKFPKREANCKIYIYSSGSINAQKLLFSHVDNGTGIAMDLNPQLSGYFDITTAGFKQEASSYTKIIDQIDKKDNEKSVLFLSDYINEVNAAIESGMNSYVVIREGNTPIPDKELASHKIIYSLSELNL.

Mg(2+) is bound by residues aspartate 9 and glutamate 11. Residues 137–138 (SS) and lysine 177 each bind substrate. Aspartate 204 provides a ligand contact to Mg(2+).

The protein belongs to the HAD-like hydrolase superfamily. MasA/MtnC family. Monomer. Mg(2+) is required as a cofactor.

It localises to the cytoplasm. The protein localises to the nucleus. The catalysed reaction is 5-methylsulfanyl-2,3-dioxopentyl phosphate + H2O = 1,2-dihydroxy-5-(methylsulfanyl)pent-1-en-3-one + phosphate. Its pathway is amino-acid biosynthesis; L-methionine biosynthesis via salvage pathway; L-methionine from S-methyl-5-thio-alpha-D-ribose 1-phosphate: step 3/6. The protein operates within amino-acid biosynthesis; L-methionine biosynthesis via salvage pathway; L-methionine from S-methyl-5-thio-alpha-D-ribose 1-phosphate: step 4/6. Functionally, bifunctional enzyme that catalyzes the enolization of 2,3-diketo-5-methylthiopentyl-1-phosphate (DK-MTP-1-P) into the intermediate 2-hydroxy-3-keto-5-methylthiopentenyl-1-phosphate (HK-MTPenyl-1-P), which is then dephosphorylated to form the acireductone 1,2-dihydroxy-3-keto-5-methylthiopentene (DHK-MTPene). This chain is Enolase-phosphatase E1, found in Lodderomyces elongisporus (strain ATCC 11503 / CBS 2605 / JCM 1781 / NBRC 1676 / NRRL YB-4239) (Yeast).